A 337-amino-acid polypeptide reads, in one-letter code: tRNA N6-adenosine threonylcarbamoyltransferase (337 aa).

Residues histidine 111 and histidine 115 each coordinate Fe cation. Substrate is bound by residues 134-138 (LVSGG), aspartate 167, glycine 180, and asparagine 272. Aspartate 300 provides a ligand contact to Fe cation.

This sequence belongs to the KAE1 / TsaD family. It depends on Fe(2+) as a cofactor.

It is found in the cytoplasm. It catalyses the reaction L-threonylcarbamoyladenylate + adenosine(37) in tRNA = N(6)-L-threonylcarbamoyladenosine(37) in tRNA + AMP + H(+). In terms of biological role, required for the formation of a threonylcarbamoyl group on adenosine at position 37 (t(6)A37) in tRNAs that read codons beginning with adenine. Is involved in the transfer of the threonylcarbamoyl moiety of threonylcarbamoyl-AMP (TC-AMP) to the N6 group of A37, together with TsaE and TsaB. TsaD likely plays a direct catalytic role in this reaction. The polypeptide is tRNA N6-adenosine threonylcarbamoyltransferase (Yersinia pseudotuberculosis serotype I (strain IP32953)).